The following is a 112-amino-acid chain: DNA-binding protein TON_1102 (112 aa).

This sequence belongs to the PDCD5 family.

The protein is DNA-binding protein TON_1102 of Thermococcus onnurineus (strain NA1).